The sequence spans 372 residues: Queuine tRNA-ribosyltransferase (372 aa).

The Proton acceptor role is filled by Asp-92. Substrate-binding positions include 92–96, Asp-146, Gln-188, and Gly-215; that span reads DSGGY. The tract at residues 246-252 is RNA binding; the sequence is GIGSLKE. Asp-265 acts as the Nucleophile in catalysis. The interval 270 to 274 is RNA binding; important for wobble base 34 recognition; that stretch reads TRLGR. 4 residues coordinate Zn(2+): Cys-303, Cys-305, Cys-308, and His-334.

This sequence belongs to the queuine tRNA-ribosyltransferase family. In terms of assembly, homodimer. Within each dimer, one monomer is responsible for RNA recognition and catalysis, while the other monomer binds to the replacement base PreQ1. It depends on Zn(2+) as a cofactor.

The catalysed reaction is 7-aminomethyl-7-carbaguanine + guanosine(34) in tRNA = 7-aminomethyl-7-carbaguanosine(34) in tRNA + guanine. The protein operates within tRNA modification; tRNA-queuosine biosynthesis. In terms of biological role, catalyzes the base-exchange of a guanine (G) residue with the queuine precursor 7-aminomethyl-7-deazaguanine (PreQ1) at position 34 (anticodon wobble position) in tRNAs with GU(N) anticodons (tRNA-Asp, -Asn, -His and -Tyr). Catalysis occurs through a double-displacement mechanism. The nucleophile active site attacks the C1' of nucleotide 34 to detach the guanine base from the RNA, forming a covalent enzyme-RNA intermediate. The proton acceptor active site deprotonates the incoming PreQ1, allowing a nucleophilic attack on the C1' of the ribose to form the product. After dissociation, two additional enzymatic reactions on the tRNA convert PreQ1 to queuine (Q), resulting in the hypermodified nucleoside queuosine (7-(((4,5-cis-dihydroxy-2-cyclopenten-1-yl)amino)methyl)-7-deazaguanosine). The polypeptide is Queuine tRNA-ribosyltransferase (Prochlorococcus marinus (strain MIT 9301)).